Reading from the N-terminus, the 217-residue chain is Elongation factor Ts (217 aa).

The interval 80-83 (TDFV) is involved in Mg(2+) ion dislocation from EF-Tu.

Belongs to the EF-Ts family.

It localises to the cytoplasm. Its function is as follows. Associates with the EF-Tu.GDP complex and induces the exchange of GDP to GTP. It remains bound to the aminoacyl-tRNA.EF-Tu.GTP complex up to the GTP hydrolysis stage on the ribosome. The polypeptide is Elongation factor Ts (Carboxydothermus hydrogenoformans (strain ATCC BAA-161 / DSM 6008 / Z-2901)).